We begin with the raw amino-acid sequence, 194 residues long: dITP/XTP pyrophosphatase (194 aa).

Residue 8–13 participates in substrate binding; the sequence is TSNPGK. Mg(2+) contacts are provided by Glu38 and Asp67. Asp67 functions as the Proton acceptor in the catalytic mechanism. Substrate-binding positions include Ser68, 152 to 155, Lys175, and 180 to 181; these read FGYD and HR.

The protein belongs to the HAM1 NTPase family. Homodimer. Requires Mg(2+) as cofactor.

It catalyses the reaction XTP + H2O = XMP + diphosphate + H(+). It carries out the reaction dITP + H2O = dIMP + diphosphate + H(+). The enzyme catalyses ITP + H2O = IMP + diphosphate + H(+). Pyrophosphatase that catalyzes the hydrolysis of nucleoside triphosphates to their monophosphate derivatives, with a high preference for the non-canonical purine nucleotides XTP (xanthosine triphosphate), dITP (deoxyinosine triphosphate) and ITP. Seems to function as a house-cleaning enzyme that removes non-canonical purine nucleotides from the nucleotide pool, thus preventing their incorporation into DNA/RNA and avoiding chromosomal lesions. This chain is dITP/XTP pyrophosphatase, found in Legionella pneumophila (strain Paris).